We begin with the raw amino-acid sequence, 888 residues long: Leukocyte tyrosine kinase receptor (888 aa).

An N-terminal signal peptide occupies residues 1 to 16 (MGCSHRLLLWLGAAGT). Residues 17 to 421 (ILCSNSEFQT…CMDLPTTASP (405 aa)) are Extracellular-facing. Cystine bridges form between cysteine 73/cysteine 86 and cysteine 168/cysteine 179. The disordered stretch occupies residues 226 to 294 (LVAAGGGGRS…RSPREGAEGG (69 aa)). Residues 260 to 273 (GSGGRGGAAGGGSG) show a composition bias toward gly residues. A disulfide bridge links cysteine 297 with cysteine 319. 2 N-linked (GlcNAc...) asparagine glycosylation sites follow: asparagine 377 and asparagine 409. A helical membrane pass occupies residues 422–446 (LILMGAVVAALALSLLMMCAVLILV). Residues 447–888 (NQKCQGLWGT…SSSSSIPGIQ (442 aa)) are Cytoplasmic-facing. The region spanning 506–782 (VTLLRALGHG…IQYCTQDPDV (277 aa)) is the Protein kinase domain. ATP is bound by residues 512-520 (LGHGAFGEV) and lysine 540. Aspartate 639 (proton acceptor) is an active-site residue. Tyrosine 672 is subject to Phosphotyrosine; by autocatalysis. Residues 857–888 (TYGSWTPRGPQGEDTGIEHCNGSSSSSIPGIQ) are disordered. The segment covering 877-888 (NGSSSSSIPGIQ) has biased composition (polar residues).

The protein belongs to the protein kinase superfamily. Tyr protein kinase family. Insulin receptor subfamily. In terms of assembly, homodimer; homodimerizes following ligand-binding. Part of a complex including LTK, TNK2 and GRB2, in which GRB2 promotes LTK recruitment by TNK2. Post-translationally, phosphorylated at tyrosine residues by autocatalysis, which activates kinase activity. In terms of tissue distribution, subsets of lymphoid and neuronal cells.

The protein localises to the cell membrane. It is found in the endoplasmic reticulum. It carries out the reaction L-tyrosyl-[protein] + ATP = O-phospho-L-tyrosyl-[protein] + ADP + H(+). With respect to regulation, activated by ligand-binding, leading to homodimerization and autophosphorylation. Receptor with a tyrosine-protein kinase activity. Following activation by ALKAL1 or ALKAL2 ligands at the cell surface, transduces an extracellular signal into an intracellular response. Ligand-binding to the extracellular domain induces tyrosine kinase activation, leading to activation of the mitogen-activated protein kinase (MAPK) pathway. Phosphorylates almost exclusively at the first tyrosine of the Y-x-x-x-Y-Y motif. The exact function of this protein is not known; studies with chimeric proteins demonstrate its ability to promote growth and specifically neurite outgrowth, and cell survival. Involved in regulation of the secretory pathway involving endoplasmic reticulum (ER) export sites (ERESs) and ER to Golgi transport. The polypeptide is Leukocyte tyrosine kinase receptor (Mus musculus (Mouse)).